The sequence spans 101 residues: uncharacterized protein (101 aa).

This is an uncharacterized protein from Saccharomyces cerevisiae (strain ATCC 204508 / S288c) (Baker's yeast).